Consider the following 527-residue polypeptide: Coproporphyrinogen III oxidase (527 aa).

The segment covering 1–14 has biased composition (low complexity); sequence MSTTDRVTTPTPTV. The interval 1–23 is disordered; that stretch reads MSTTDRVTTPTPTVSGTDAPGPD. Residues 33–38, 56–57, K64, and 78–81 each bind FAD; these read GGGITG, ES, and GPDS. A disordered region spans residues 231 to 267; sequence RRAARQRAAQNNAQQNSSHQNSTGQNNSAGTRGPAAS. Positions 236 to 252 are enriched in low complexity; sequence QRAAQNNAQQNSSHQNS. FAD is bound by residues V300, W448, and 487–489; that span reads VGL.

This sequence belongs to the protoporphyrinogen/coproporphyrinogen oxidase family. Coproporphyrinogen III oxidase subfamily. FAD serves as cofactor.

Its subcellular location is the cytoplasm. The catalysed reaction is coproporphyrinogen III + 3 O2 = coproporphyrin III + 3 H2O2. Its pathway is porphyrin-containing compound metabolism; protoheme biosynthesis. Involved in coproporphyrin-dependent heme b biosynthesis. Catalyzes the oxidation of coproporphyrinogen III to coproporphyrin III. This chain is Coproporphyrinogen III oxidase, found in Propionibacterium freudenreichii subsp. freudenreichii.